Consider the following 814-residue polypeptide: DNA replication licensing factor Mcm6 (814 aa).

The C4-type zinc-finger motif lies at 152–179 (CLDCQTEIRDVEQQFKFTNPTICRNPVC). Positions 339-545 (LYQNLINSLF…VVDYAIARKI (207 aa)) constitute an MCM domain. 6 residues coordinate ATP: S392, T393, A394, K395, S396, and N497. The Arginine finger signature appears at 521 to 524 (SRFD). R612 and E615 together coordinate ADP. The segment at 656-696 (DIHLDEEEGEENENVMDIGEETPEDTPRTNETEENDQDTPA) is disordered. Positions 659–679 (LDEEEGEENENVMDIGEETPE) are enriched in acidic residues.

It belongs to the MCM family. Component of the Mcm2-7 complex. The complex forms a toroidal hexameric ring with the proposed subunit order Mcm2-Mcm6-Mcm4-Mcm7-Mcm3-Mcm5 (By simililarity). The heterodimers of Mcm4/Mcm6 and Mcm3/Mcm5 interact with Mcm2 and Mcm7.

It localises to the nucleus. It carries out the reaction ATP + H2O = ADP + phosphate + H(+). Acts as a component of the MCM2-7 complex (MCM complex) which is the replicative helicase essential for 'once per cell cycle' DNA replication initiation and elongation in eukaryotic cells. Core component of CDC45-MCM-GINS (CMG) helicase, the molecular machine that unwinds template DNA during replication, and around which the replisome is built. The active ATPase sites in the MCM2-7 ring are formed through the interaction surfaces of two neighboring subunits such that a critical structure of a conserved arginine finger motif is provided in trans relative to the ATP-binding site of the Walker A box of the adjacent subunit. The six ATPase active sites, however, are likely to contribute differentially to the complex helicase activity. The protein is DNA replication licensing factor Mcm6 of Anopheles gambiae (African malaria mosquito).